The sequence spans 196 residues: Ribosome maturation factor RimP (196 aa).

Positions 164-196 (LAPQKPNKPGPKKPGHEKKKPSNESAAGKPRAE) are disordered. Residues 173-182 (GPKKPGHEKK) show a composition bias toward basic residues.

This sequence belongs to the RimP family.

The protein resides in the cytoplasm. Required for maturation of 30S ribosomal subunits. The polypeptide is Ribosome maturation factor RimP (Xanthomonas euvesicatoria pv. vesicatoria (strain 85-10) (Xanthomonas campestris pv. vesicatoria)).